A 75-amino-acid polypeptide reads, in one-letter code: Serine rich endogenous peptide 4 (75 aa).

A signal peptide spans 1-31 (MATKTSNLGHLLLSLFILLLFILSQVGVAQA). Residues 51-75 (PPPLRGIVKPPIASFHSASPKDKGP) form a disordered region. Residues 61–75 (PIASFHSASPKDKGP) carry the SCOOP motif motif. The SxS motif essential for MIK2 binding signature appears at 67-69 (SAS).

The protein belongs to the serine rich endogenous peptide (SCOOP) phytocytokine family. As to quaternary structure, interacts with MIK2 (via extracellular leucine-rich repeat domain); this interaction triggers the formation of complex between MIK2 and the BAK1/SERK3 and SERK4 coreceptors, and subsequent BAK1 activation by phosphorylation. Mostly expressed in leaves and seedlings shoots, and, to a lower extent, in roots, stems, siliques, seeds and flowers.

The protein resides in the cell membrane. Its subcellular location is the secreted. The protein localises to the extracellular space. It is found in the apoplast. Functionally, brassicaceae-specific phytocytokine (plant endogenous peptide released into the apoplast) perceived by MIK2 in a BAK1/SERK3 and SERK4 coreceptors-dependent manner, that modulates various physiological and antimicrobial processes including growth prevention and reactive oxygen species (ROS) response regulation. Inhibits root growth. Prevents general growth and development. Exhibits antibacterial effects against Pseudomonas syringae pv. tomato DC3000, Ralstonia solanacearum, Bacillus subtilis and Agrobacterium tumefaciens, thus being an antimicrobial peptide (AMP). The sequence is that of Serine rich endogenous peptide 4 from Arabidopsis thaliana (Mouse-ear cress).